Consider the following 162-residue polypeptide: Zinc finger protein ZAT12 (162 aa).

2 C2H2-type zinc fingers span residues 39–61 (FTCKTCLKQFHSFQALGGHRASH) and 82–104 (HPCPICGVEFPMGQALGGHMRRH).

In terms of tissue distribution, expressed in roots, stems and flowers.

It is found in the nucleus. Functionally, transcriptional repressor involved in light acclimation, cold and oxidative stress responses. May regulate a collection of transcripts involved in response to high-light, cold and oxidative stress. The protein is Zinc finger protein ZAT12 (ZAT12) of Arabidopsis thaliana (Mouse-ear cress).